Reading from the N-terminus, the 102-residue chain is Large ribosomal subunit protein bL21 (102 aa).

Belongs to the bacterial ribosomal protein bL21 family. Part of the 50S ribosomal subunit. Contacts protein L20.

Its function is as follows. This protein binds to 23S rRNA in the presence of protein L20. The polypeptide is Large ribosomal subunit protein bL21 (Listeria innocua serovar 6a (strain ATCC BAA-680 / CLIP 11262)).